A 95-amino-acid chain; its full sequence is Aspartyl/glutamyl-tRNA(Asn/Gln) amidotransferase subunit C (95 aa).

It belongs to the GatC family. In terms of assembly, heterotrimer of A, B and C subunits.

The catalysed reaction is L-glutamyl-tRNA(Gln) + L-glutamine + ATP + H2O = L-glutaminyl-tRNA(Gln) + L-glutamate + ADP + phosphate + H(+). It catalyses the reaction L-aspartyl-tRNA(Asn) + L-glutamine + ATP + H2O = L-asparaginyl-tRNA(Asn) + L-glutamate + ADP + phosphate + 2 H(+). Its function is as follows. Allows the formation of correctly charged Asn-tRNA(Asn) or Gln-tRNA(Gln) through the transamidation of misacylated Asp-tRNA(Asn) or Glu-tRNA(Gln) in organisms which lack either or both of asparaginyl-tRNA or glutaminyl-tRNA synthetases. The reaction takes place in the presence of glutamine and ATP through an activated phospho-Asp-tRNA(Asn) or phospho-Glu-tRNA(Gln). The sequence is that of Aspartyl/glutamyl-tRNA(Asn/Gln) amidotransferase subunit C from Pseudomonas syringae pv. syringae (strain B728a).